The primary structure comprises 397 residues: MSSKDIVLAFSGGLDTSFCIPYLQERGYAVHTVFADTGGVDAEERDFIEKRAAELGAASHVTVDGGPAIWEGFVKPFVWAGEGYQGQYPLLVSDRYLIVDAALKRAEELGTRIIAHGCTGMGNDQVRFDLAVKALGDYQIVAPIREIQKEHTQTRAYEQKYLEERGFGVRAKQKAYTINENLLGVTMSGGEIDRWEAPGEGARGWCAPRSAWPTEALTVTLKFVEGEAVALDGKALPGAQILAKLNTLFAQYGVGRGVYTGDTVIGLKGRIVFEAPGLISLLTAHRALEDAVLTKQQNRFKPDVARKWVELVYEGFYHDPLKTDIEAFLKSSQSKVNGEVTLETRGGRVDAVAVRSPHLLNAKGATYAQSADWGVEEAEGFIKLFGMSSTLYAQVNR.

Residues 9–17 (AFSGGLDTS) and Ala-35 contribute to the ATP site. L-citrulline-binding residues include Tyr-88 and Ser-93. Gly-117 is an ATP binding site. Thr-119, Asn-123, and Asp-124 together coordinate L-aspartate. Asn-123 serves as a coordination point for L-citrulline. Arg-127 is a binding site for L-citrulline.

It belongs to the argininosuccinate synthase family. Type 1 subfamily. As to quaternary structure, homotetramer.

It is found in the cytoplasm. It catalyses the reaction L-citrulline + L-aspartate + ATP = 2-(N(omega)-L-arginino)succinate + AMP + diphosphate + H(+). It functions in the pathway amino-acid biosynthesis; L-arginine biosynthesis; L-arginine from L-ornithine and carbamoyl phosphate: step 2/3. This is Argininosuccinate synthase from Xanthomonas campestris pv. campestris (strain ATCC 33913 / DSM 3586 / NCPPB 528 / LMG 568 / P 25).